The sequence spans 465 residues: Ribulose bisphosphate carboxylase large chain (465 aa).

Position 4 is an N6,N6,N6-trimethyllysine (Lys4). Substrate is bound by residues Asn113 and Thr163. The active-site Proton acceptor is Lys165. Residue Lys167 coordinates substrate. The Mg(2+) site is built by Lys191, Asp193, and Glu194. Lys191 is subject to N6-carboxylysine. His284 functions as the Proton acceptor in the catalytic mechanism. The substrate site is built by Arg285, His317, and Ser369.

This sequence belongs to the RuBisCO large chain family. Type I subfamily. Heterohexadecamer of 8 large chains and 8 small chains; disulfide-linked. The disulfide link is formed within the large subunit homodimers. It depends on Mg(2+) as a cofactor. The disulfide bond which can form in the large chain dimeric partners within the hexadecamer appears to be associated with oxidative stress and protein turnover.

The protein resides in the plastid. It localises to the chloroplast. It carries out the reaction 2 (2R)-3-phosphoglycerate + 2 H(+) = D-ribulose 1,5-bisphosphate + CO2 + H2O. The enzyme catalyses D-ribulose 1,5-bisphosphate + O2 = 2-phosphoglycolate + (2R)-3-phosphoglycerate + 2 H(+). Functionally, ruBisCO catalyzes two reactions: the carboxylation of D-ribulose 1,5-bisphosphate, the primary event in carbon dioxide fixation, as well as the oxidative fragmentation of the pentose substrate in the photorespiration process. Both reactions occur simultaneously and in competition at the same active site. The protein is Ribulose bisphosphate carboxylase large chain of Acer saccharum (Sugar maple).